We begin with the raw amino-acid sequence, 141 residues long: ATP synthase epsilon chain (141 aa).

Belongs to the ATPase epsilon chain family. As to quaternary structure, F-type ATPases have 2 components, CF(1) - the catalytic core - and CF(0) - the membrane proton channel. CF(1) has five subunits: alpha(3), beta(3), gamma(1), delta(1), epsilon(1). CF(0) has three main subunits: a, b and c.

The protein localises to the cell inner membrane. Functionally, produces ATP from ADP in the presence of a proton gradient across the membrane. This chain is ATP synthase epsilon chain, found in Burkholderia multivorans (strain ATCC 17616 / 249).